The sequence spans 897 residues: Pre-mRNA-splicing factor CWC22 homolog (897 aa).

Over residues 1–10 (MSSSRSQSPE) the composition is skewed to polar residues. The disordered stretch occupies residues 1-155 (MSSSRSQSPE…EKKKKEPLDI (155 aa)). Basic and acidic residues-rich tracts occupy residues 36 to 54 (SSEK…REVS), 93 to 107 (RSKE…EKSP), and 131 to 155 (RSSE…PLDI). Residues 194 to 382 (KKKIHGLVNR…ETAMQIRKDK (189 aa)) enclose the MIF4G domain. The interval 444–472 (NADISDEDGGDELDDEEEGSDVEEAPKKT) is disordered. The span at 447-466 (ISDEDGGDELDDEEEGSDVE) shows a compositional bias: acidic residues. The MI domain occupies 485–601 (AFRREVYLTM…DWKILADMKM (117 aa)). Low complexity-rich tracts occupy residues 689 to 710 (LDQL…SDSS) and 720 to 730 (DSSSDSSSSSE). A disordered region spans residues 689-897 (LDQLKAESSS…VESDDRRRRR (209 aa)). Over residues 743–897 (NSEESSKKKE…VESDDRRRRR (155 aa)) the composition is skewed to basic and acidic residues.

This sequence belongs to the CWC22 family. In terms of tissue distribution, expressed in germ cells, oocytes, and sperm cells.

The protein resides in the nucleus. Its subcellular location is the nucleus speckle. In terms of biological role, required for pre-mRNA splicing and for exon-junction complex (EJC) assembly. Hinders EIF4A3 from non-specifically binding RNA and escorts it to the splicing machinery to promote EJC assembly on mature mRNAs. Through its role in EJC assembly, required for nonsense-mediated mRNA decay. Plays a role in the nuclear retention of unspliced mRNAs. Plays a role in sex determination. Required for early embryogenesis and tissue differentiation. In Caenorhabditis elegans, this protein is Pre-mRNA-splicing factor CWC22 homolog.